The sequence spans 148 residues: D-aminoacyl-tRNA deacylase (148 aa).

Residues 137–138 (GP) carry the Gly-cisPro motif, important for rejection of L-amino acids motif.

The protein belongs to the DTD family. Homodimer.

Its subcellular location is the cytoplasm. The enzyme catalyses glycyl-tRNA(Ala) + H2O = tRNA(Ala) + glycine + H(+). It carries out the reaction a D-aminoacyl-tRNA + H2O = a tRNA + a D-alpha-amino acid + H(+). Functionally, an aminoacyl-tRNA editing enzyme that deacylates mischarged D-aminoacyl-tRNAs. Also deacylates mischarged glycyl-tRNA(Ala), protecting cells against glycine mischarging by AlaRS. Acts via tRNA-based rather than protein-based catalysis; rejects L-amino acids rather than detecting D-amino acids in the active site. By recycling D-aminoacyl-tRNA to D-amino acids and free tRNA molecules, this enzyme counteracts the toxicity associated with the formation of D-aminoacyl-tRNA entities in vivo and helps enforce protein L-homochirality. The chain is D-aminoacyl-tRNA deacylase from Lactiplantibacillus plantarum (strain ATCC BAA-793 / NCIMB 8826 / WCFS1) (Lactobacillus plantarum).